We begin with the raw amino-acid sequence, 1106 residues long: Solute carrier family 12 member 7 (1106 aa).

The Cytoplasmic portion of the chain corresponds to 1-143 (MVYTALTWQR…PRESKAPCMG (143 aa)). Residues 17 to 83 (GLVPSHLPQE…SPFIGSAAAD (67 aa)) form a disordered region. Residues Ser-74 and Ser-86 each carry the phosphoserine modification. A discontinuously helical membrane pass occupies residues 144 to 166 (TFIGVYLPCLQNILGVILFLRLT). 2 residues coordinate K(+): Asn-155 and Ile-156. Val-159 is a chloride binding site. The Extracellular segment spans residues 167 to 173 (WIVGAAG). The helical transmembrane segment at 174 to 196 (VLESFLVVSMCCTCTMLTAVSMS) threads the bilayer. At 197-220 (AIATNGVVPAGGSYYMISRSLGPE) the chain is on the cytoplasmic side. The helical transmembrane segment at 221-249 (FGGAVGLCFYLGTTFAGAMYILGTIEIFL) threads the bilayer. Topologically, residues 250–273 (TYISPGAAVFQAETPEGEAAALLH) are extracellular. The next 2 helical transmembrane spans lie at 274 to 295 (NMRV…VGVK) and 296 to 324 (YVNK…KTAF). At 325 to 443 (DPPDIPVCLL…PYVLSDITTY (119 aa)) the chain is on the extracellular side. N-linked (GlcNAc...) asparagine glycosylation is found at Asn-336, Asn-355, and Asn-384. Residues 444 to 464 (FTVLVGIYFPSVTGIMAGSNR) form a helical membrane-spanning segment. Positions 453 and 456 each coordinate K(+). Pro-453 serves as a coordination point for chloride. 2 residues coordinate chloride: Gly-457 and Ile-458. Residues 465 to 474 (SGDLKDAQKS) are Cytoplasmic-facing. The helical transmembrane segment at 475 to 497 (IPTGTILAIVTTSFIYLSCIVLF) threads the bilayer. Topologically, residues 498–528 (GACIEGVVLRDKFGEALQGNLVIGMLAWPSP) are extracellular. Residues 529 to 555 (WVIVIGSFFSTCGAGLQSLTGAPRLLQ) form a helical membrane-spanning segment. The Cytoplasmic portion of the chain corresponds to 556–578 (AIARDGIVPFLQVFGHGKANGEP). 2 helical membrane passes run 579–597 (TWAL…LIAS) and 598–622 (LDSV…ACAV). Tyr-613 contributes to the chloride binding site. The Cytoplasmic segment spans residues 623-636 (QTLLRTPNWRPRFK). Transmembrane regions (helical) follow at residues 637–659 (YYHW…ICSW) and 660–675 (YYAL…IYKY). Topologically, residues 676 to 1106 (IEYRGAEKEW…GGREVITIYS (431 aa)) are cytoplasmic. A scissor helix region spans residues 688-704 (GIRGLSLNAARYALLRV). The interval 980-999 (RNTASHTAASRAQAPPTPDK) is disordered. Thr-996 and Thr-1003 each carry phosphothreonine.

This sequence belongs to the SLC12A transporter family. K/Cl co-transporter subfamily. In terms of assembly, homodimer; adopts a domain-swap conformation at the scissor helices connecting the transmembrane domain and C-terminal domain. Heterodimer with K-Cl cotransporter SLC12A5. As to expression, widely expressed. Higher levels in heart, kidney and lung (at protein level).

It localises to the cell membrane. It catalyses the reaction K(+)(in) + chloride(in) = K(+)(out) + chloride(out). Its activity is regulated as follows. Activated by N-ethylmaleimide (NEM). Inhibited by furosemide, DIDS and bumetanide. The inhibition is much stronger in the presence of 50 mM K(+) in the uptake medium. Inhibited by DIOA. Inhibited by WNK3. Its function is as follows. Mediates electroneutral potassium-chloride cotransport when activated by cell swelling. May mediate K(+) uptake into Deiters' cells in the cochlea and contribute to K(+) recycling in the inner ear. Important for the survival of cochlear outer and inner hair cells and the maintenance of the organ of Corti. May be required for basolateral Cl(-) extrusion in the kidney and contribute to renal acidification. This Oryctolagus cuniculus (Rabbit) protein is Solute carrier family 12 member 7.